A 162-amino-acid chain; its full sequence is Endoribonuclease YbeY (162 aa).

Residues His-126, His-130, and His-136 each contribute to the Zn(2+) site.

Belongs to the endoribonuclease YbeY family. Zn(2+) is required as a cofactor.

It is found in the cytoplasm. Single strand-specific metallo-endoribonuclease involved in late-stage 70S ribosome quality control and in maturation of the 3' terminus of the 16S rRNA. This Fusobacterium nucleatum subsp. nucleatum (strain ATCC 25586 / DSM 15643 / BCRC 10681 / CIP 101130 / JCM 8532 / KCTC 2640 / LMG 13131 / VPI 4355) protein is Endoribonuclease YbeY.